The sequence spans 258 residues: Large ribosomal subunit protein bL28m (258 aa).

A mitochondrion-targeting transit peptide spans 1–21 (MQKIFRPFQLTRGFTSSVKNF).

Belongs to the bacterial ribosomal protein bL28 family. As to quaternary structure, component of the mitochondrial large ribosomal subunit (mt-LSU). Mature yeast 74S mitochondrial ribosomes consist of a small (37S) and a large (54S) subunit. The 37S small subunit contains a 15S ribosomal RNA (15S mt-rRNA) and 34 different proteins. The 54S large subunit contains a 21S rRNA (21S mt-rRNA) and 46 different proteins.

Its subcellular location is the mitochondrion. Functionally, component of the mitochondrial ribosome (mitoribosome), a dedicated translation machinery responsible for the synthesis of mitochondrial genome-encoded proteins, including at least some of the essential transmembrane subunits of the mitochondrial respiratory chain. The mitoribosomes are attached to the mitochondrial inner membrane and translation products are cotranslationally integrated into the membrane. The protein is Large ribosomal subunit protein bL28m (MRPL24) of Saccharomyces cerevisiae (strain ATCC 204508 / S288c) (Baker's yeast).